An 85-amino-acid polypeptide reads, in one-letter code: UPF0335 protein WP0746 (85 aa).

The protein belongs to the UPF0335 family.

The sequence is that of UPF0335 protein WP0746 from Wolbachia pipientis subsp. Culex pipiens (strain wPip).